The chain runs to 643 residues: 3D-(3,5/4)-trihydroxycyclohexane-1,2-dione hydrolase (643 aa).

E65 provides a ligand contact to thiamine diphosphate. The tract at residues 441 to 521 (SLPGDLQRMW…VNVLLFDNCG (81 aa)) is thiamine pyrophosphate binding. Residues D492 and N519 each contribute to the Mg(2+) site.

This sequence belongs to the TPP enzyme family. Mg(2+) serves as cofactor. Requires thiamine diphosphate as cofactor.

The enzyme catalyses 3D-3,5/4-trihydroxycyclohexane-1,2-dione + H2O = 5-deoxy-D-glucuronate + H(+). It functions in the pathway polyol metabolism; myo-inositol degradation into acetyl-CoA; acetyl-CoA from myo-inositol: step 3/7. Functionally, involved in the cleavage of the C1-C2 bond of 3D-(3,5/4)-trihydroxycyclohexane-1,2-dione (THcHDO) to yield 5-deoxy-glucuronate (5DG). This chain is 3D-(3,5/4)-trihydroxycyclohexane-1,2-dione hydrolase, found in Clostridium botulinum (strain Alaska E43 / Type E3).